Reading from the N-terminus, the 143-residue chain is Subtelomeric hrmA-associated cluster protein cgnA (143 aa).

G-Q-I/R/S repeat units follow at residues 11-13, 14-16, 17-19, 20-22, 23-25, 26-28, 29-31, 32-34, 35-37, 38-40, 41-43, 44-46, 47-49, 50-52, 53-55, 56-58, 59-61, 62-64, 65-67, 68-70, 71-73, 74-76, 77-79, 80-82, 83-85, 86-88, 89-91, 92-94, and 95-97; these read GQI, GPI, GQR, GQS, and GQA. The Collagen-like domain maps to 11 to 68; it reads GQIGPIGQRGQSGQRGQSGQRGQSGQIGQSGQSGQSGQIGQIGQIGQIGQIGQIGQIG. The interval 11–97 is 29 X 3 AA approximate tandem repeats of G-Q-I/R/S; sequence GQIGPIGQRG…IGQIGQIGQA (87 aa). Residues 16–49 are disordered; the sequence is IGQRGQSGQRGQSGQRGQSGQIGQSGQSGQSGQI.

The protein localises to the secreted. Collagen-like protein; part of the subtelomeric hrmA-associated cluster (HAC) containing genes that alter the hyphal surface (such as reduced total chitin or increased beta-glucan exposure) and perturb inter-hyphal interactions within the developing biofilms, resulting in a loss of vertically aligned polarized growing filaments. Consequently, this hypoxia-typic morphotype (called H-MORPH) with altered biofilm architecture leads to increased hypoxia fitness, increased host inflammation, rapid disease progression, and mortality in a murine model of invasive aspergillosis. CgnA is directly involved in the reduction of total surface chitin and the increase of beta-glucan exposure, and mediates the detachment of the extracellular matrix and especially of its component galactosaminogalactan (GAG). This Aspergillus fumigatus (strain ATCC MYA-4609 / CBS 101355 / FGSC A1100 / Af293) (Neosartorya fumigata) protein is Subtelomeric hrmA-associated cluster protein cgnA.